The chain runs to 249 residues: Indole-3-glycerol phosphate synthase (249 aa).

This sequence belongs to the TrpC family.

The enzyme catalyses 1-(2-carboxyphenylamino)-1-deoxy-D-ribulose 5-phosphate + H(+) = (1S,2R)-1-C-(indol-3-yl)glycerol 3-phosphate + CO2 + H2O. The protein operates within amino-acid biosynthesis; L-tryptophan biosynthesis; L-tryptophan from chorismate: step 4/5. This Pyrobaculum arsenaticum (strain DSM 13514 / JCM 11321 / PZ6) protein is Indole-3-glycerol phosphate synthase.